A 283-amino-acid polypeptide reads, in one-letter code: (+)-O-methylkolavelool synthase (283 aa).

Residues Gln106, Asn129 to Ala130, and His151 each bind S-adenosyl-L-methionine.

Belongs to the methyltransferase superfamily.

The enzyme catalyses (+)-kolavelool + S-adenosyl-L-methionine = (+)-O-methylkolavelool + S-adenosyl-L-homocysteine + H(+). Its function is as follows. Involved in the biosynthesis of the diterpene (+)-O-methylkolavelool. Catalyzes the transfer of a methyl group from S-adenosyl-L-methionine to the hydroxy group of (+)-kolavelool, forming (+)-O-methylkolavelool. The polypeptide is (+)-O-methylkolavelool synthase (Herpetosiphon aurantiacus (strain ATCC 23779 / DSM 785 / 114-95)).